The sequence spans 332 residues: COP9 signalosome complex subunit 5 (332 aa).

An MPN domain is found at 54–191; it reads VKISAIALLK…IGAFRTYPQG (138 aa). H137, H139, and D150 together coordinate Zn(2+). Residues 137–150 carry the JAMM motif motif; it reads HSHPGYGCWLSGID.

Belongs to the peptidase M67A family. CSN5 subfamily. As to quaternary structure, component of the CSN complex. The holocomplex is comprised of 8 subunits csn1-8. In the complex, it probably interacts directly with csn1, csn2, csn3, csn4, csn6 and csn8. The cofactor is a divalent metal cation.

The protein resides in the cytoplasm. The protein localises to the nucleus. Its function is as follows. Probable protease subunit of the COP9 signalosome complex (CSN), a complex involved in various cellular and developmental processes. The CSN complex is an essential regulator of the ubiquitin (Ubl) conjugation pathway by mediating the deneddylation of the cullin subunits of E3 ligasew complexes, leading to modify the Ubl ligase activity. In the complex, it probably acts as the catalytic center that mediates the cleavage of Nedd8 from cullins. Csn5 is essential for growth or survival. This is COP9 signalosome complex subunit 5 (csn5) from Dictyostelium discoideum (Social amoeba).